The chain runs to 579 residues: ERV-BabFcenv provirus ancestral Env polyprotein (579 aa).

The N-terminal stretch at 1-22 (MISAVLNLPSTPLLPLLWFTLI) is a signal peptide. The tract at residues 23-387 (IPASLTNPKF…LSSSNNIQKQ (365 aa)) is surface protein. Topologically, residues 23 to 523 (IPASLTNPKF…VWLLPVVQQM (501 aa)) are extracellular. N-linked (GlcNAc...) asparagine glycosylation is found at Asn135, Asn203, Asn242, and Asn251. A CXXC motif is present at residues 255-258 (CFLC). 3 N-linked (GlcNAc...) asparagine glycosylation sites follow: Asn276, Asn312, and Asn337. Residues 388 to 408 (AVFLPLIIGVSLASSLVASGL) are fusion peptide. Residues 388–579 (AVFLPLIIGV…LPTSDPNYAP (192 aa)) are transmembrane protein. A CKS-17 motif is present at residues 453–469 (AQNRRALDLLTAEKGGT). A disulfide bond links Cys470 and Cys477. Residues 470–478 (CLFLGEECC) carry the CX6CC motif. Asn482 carries N-linked (GlcNAc...) asparagine glycosylation. Residues 524–544 (LPFLIPILILCLMLCLAPILI) form a helical membrane-spanning segment. Over 545-579 (KFLRARVQEITRVTFNQMLLHPYTQLPTSDPNYAP) the chain is Cytoplasmic.

The protein belongs to the gamma type-C retroviral envelope protein family. HERV class-I F(c)1 env subfamily. Post-translationally, specific enzymatic cleavages in vivo yield the mature SU and TM proteins. The CXXC motif is highly conserved across a broad range of retroviral envelope proteins. It is thought to participate in the formation of a labile disulfide bond possibly with the CX6CC motif present in the transmembrane domain.

The protein localises to the cell membrane. In terms of biological role, retroviral envelope proteins mediate receptor recognition and membrane fusion during early infection. Endogenous envelope proteins may have kept, lost or modified their original function during evolution. This chain is ERV-BabFcenv provirus ancestral Env polyprotein, found in Papio anubis (Olive baboon).